Consider the following 316-residue polypeptide: Fe-S cluster assembly protein DRE2 (316 aa).

The N-terminal SAM-like domain stretch occupies residues 7 to 139; sequence VSPPKRTLLL…PDYGDNEGAV (133 aa). Residues 140-208 are linker; it reads TLKFGLKKKN…EDTLMTEEDL (69 aa). [2Fe-2S] cluster-binding residues include C218, C229, C232, and C234. Residues 218–234 form a fe-S binding site A region; it reads CQPKAGKRRRACKDCSC. 4 residues coordinate [4Fe-4S] cluster: C279, C282, C290, and C293. 2 short sequence motifs (cx2C motif) span residues 279 to 282 and 290 to 293; these read CGNC and CDGC. The tract at residues 279–293 is fe-S binding site B; sequence CGNCSLGDAFRCDGC.

Belongs to the anamorsin family. As to quaternary structure, monomer. Interacts with TAH18. Interacts with MIA40. It depends on [2Fe-2S] cluster as a cofactor. Requires [4Fe-4S] cluster as cofactor.

It is found in the cytoplasm. The protein localises to the mitochondrion intermembrane space. Its function is as follows. Component of the cytosolic iron-sulfur (Fe-S) protein assembly (CIA) machinery required for the maturation of extramitochondrial Fe-S proteins. Part of an electron transfer chain functioning in an early step of cytosolic Fe-S biogenesis, facilitating the de novo assembly of a [4Fe-4S] cluster on the scaffold complex CFD1-NBP35. Electrons are transferred to DRE2 from NADPH via the FAD- and FMN-containing protein TAH18. TAH18-DRE2 are also required for the assembly of the diferric tyrosyl radical cofactor of ribonucleotide reductase (RNR), probably by providing electrons for reduction during radical cofactor maturation in the catalytic small subunit RNR2. The chain is Fe-S cluster assembly protein DRE2 from Fusarium vanettenii (strain ATCC MYA-4622 / CBS 123669 / FGSC 9596 / NRRL 45880 / 77-13-4) (Fusarium solani subsp. pisi).